Here is a 122-residue protein sequence, read N- to C-terminus: Large ribosomal subunit protein uL14 (122 aa).

It belongs to the universal ribosomal protein uL14 family. Part of the 50S ribosomal subunit. Forms a cluster with proteins L3 and L19. In the 70S ribosome, L14 and L19 interact and together make contacts with the 16S rRNA in bridges B5 and B8.

Its function is as follows. Binds to 23S rRNA. Forms part of two intersubunit bridges in the 70S ribosome. The sequence is that of Large ribosomal subunit protein uL14 from Caulobacter sp. (strain K31).